The following is a 291-amino-acid chain: uncharacterized protein (291 aa).

Disordered regions lie at residues 1–62 (MELR…SSKK), 220–242 (PLPASRPSLNLSPQKVPTGTDKV), and 255–291 (ENNKPHPRMRRRSDNPATNEYVRVFHLEKKEPKSRKK). Residues 18 to 41 (EPAKNKSERSIESNERVGTREAKS) show a composition bias toward basic and acidic residues. Composition is skewed to polar residues over residues 42-58 (ENTSVFSPAYSDTATTD) and 226-236 (PSLNLSPQKVP). Position 267 is a phosphoserine (Ser-267).

Its subcellular location is the cytoplasm. The protein localises to the nucleus. This is an uncharacterized protein from Saccharomyces cerevisiae (strain ATCC 204508 / S288c) (Baker's yeast).